The primary structure comprises 598 residues: Insulin-like growth factor 2 mRNA-binding protein 1 (598 aa).

RRM domains lie at 2-75 (NKLY…HSVP) and 81-156 (RKLQ…YIPD). The disordered stretch occupies residues 155–195 (PDENSEVDSQRGPDNGRRPGYGPRGTSRQMSPGSGIPSKHQ). A compositionally biased stretch (basic and acidic residues) spans 162–171 (DSQRGPDNGR). Ser-185 is modified (phosphoserine). 2 KH domains span residues 198–263 (DIPL…CRMI) and 279–346 (EVPL…EQEI). Position 399 is a phosphotyrosine (Tyr-399). 2 KH domains span residues 407–472 (QETV…QGRI) and 489–555 (KLET…QRKI). The tract at residues 561 to 598 (QVKQQQKGGGMGTPQGPHPQGMTELGSPQGLAQEPRRK) is disordered. Phosphothreonine is present on residues Thr-573 and Thr-583. The segment covering 574 to 583 (PQGPHPQGMT) has biased composition (low complexity). Ser-587 is subject to Phosphoserine.

This sequence belongs to the RRM IMP/VICKZ family. In terms of assembly, component of the CRD-mediated complex.

It is found in the nucleus. Its subcellular location is the cytoplasm. The protein localises to the perinuclear region. The protein resides in the P-body. It localises to the stress granule. It is found in the cell projection. Its subcellular location is the growth cone. The protein localises to the filopodium. The protein resides in the lamellipodium. In terms of biological role, RNA-binding factor that recruits target transcripts to cytoplasmic protein-RNA complexes (mRNPs). This transcript 'caging' into mRNPs allows mRNA transport and transient storage. It also modulates the rate and location at which target transcripts encounter the translational apparatus and shields them from endonuclease attacks or microRNA-mediated degradation. Preferentially binds to N6-methyladenosine (m6A)-containing mRNAs and increases their stability. Plays a direct role in the transport and translation of transcripts required for axonal regeneration in adult sensory neurons. Regulates localized beta-actin/ACTB mRNA translation in polarized cells, a crucial process for cell migration and neurite outgrowth. Promotes the directed movement of cells by fine-tuning intracellular signaling networks and enhances the velocity of cell migration. The chain is Insulin-like growth factor 2 mRNA-binding protein 1 (igf2bp1) from Danio rerio (Zebrafish).